The primary structure comprises 812 residues: MAQILLHGTLHATIFEAESLSNPHRATGGAPKFIRKLVEGIEDTVGVGKGATKIYATVDLEKARVGRTRMISNEPVNPRWYESFHIYCAHMAADVIFTVKIDNSIGASLIGRAYLAVQDLLGGEEIDKWLEISDENREPVGDSKIHVKLQYFDVGKDRNWARGVRSTKYPGVPYTFFSQRQGCKVTLYQDAHVPDNFVPRIQLADGKNYEPHRCWEDIFDAISKAQHLIYITGWSVYTEITLVRDTNRPKPGGDVTLGELLKRKASEGVRVLMLVWDDRTSVGLLKKDGLMATHDEETANYFHGTDVNCVLCPRNPDDSGSFVQDLQISTMFTHHQKIVVVDHEMPNQGSQQRRIVSFIGGIDLCDGRYDTQYHSLFRTLDTVHHDDFHQPNFEGGSIKKGGPREPWHDIHSRLEGPIAWDVLYNFEQRWRKQGGKDLLVRLRDLPDIIIPPSPVMFPEDRETWNVQLFRSIDGGAAFGFPETPEEAARAGLVSGKDQIIDRSIQDAYVNAIRRAKNFIYIENQYFLGSSYGWKPEGIKPEEIGALHLIPKELSLKIVSKIEAGERFTVYVVVPMWPEGVPESASVQAILDWQRRTMEMMYTDIAQALEANGIEANPKDYLTFFCLGNREVKQEGEYEPEEHPEPDTDYIRAQEARRFMIYVHTKMMIVDDEYIIIGSANINQRSMDGARDSEIAMGAYQPYHLATRQPARGQIHGFRMSLWYEHLGMLEDVFQRPESVECVQKVNEVAEKYWDLYSSDDLEQDLPGHLLSYPIGVTADGSVTELPGMENFPDTRARVLGNKSDYLPPILTT.

The region spanning 1 to 130 (MAQILLHGTL…LGGEEIDKWL (130 aa)) is the C2 domain. D190 contacts Ca(2+). A PLD phosphodiesterase 1 domain is found at 330 to 368 (TMFTHHQKIVVVDHEMPNQGSQQRRIVSFIGGIDLCDGR). Residues H335, K337, and D342 contribute to the active site. Position 335 (H335) interacts with a 1,2-diacyl-sn-glycero-3-phosphate. Residues H374 and H408 each contribute to the Ca(2+) site. A 1,2-diacyl-sn-glycero-3-phosphate-binding residues include Q524 and H663. Positions 658–685 (FMIYVHTKMMIVDDEYIIIGSANINQRS) constitute a PLD phosphodiesterase 2 domain. Active-site residues include H663, K665, and D670. E724 provides a ligand contact to Ca(2+).

This sequence belongs to the phospholipase D family. C2-PLD subfamily. Monomer. The cofactor is Ca(2+).

It catalyses the reaction a 1,2-diacyl-sn-glycero-3-phosphocholine + H2O = a 1,2-diacyl-sn-glycero-3-phosphate + choline + H(+). Hydrolyzes glycerol-phospholipids at the terminal phosphodiesteric bond. Plays an important role in various cellular processes. The chain is Phospholipase D alpha 1 (PLD1) from Zea mays (Maize).